The following is a 510-amino-acid chain: GMP synthase [glutamine-hydrolyzing] (510 aa).

The region spanning 5 to 195 (LVIVVDFGGQ…LFDICNLKGD (191 aa)) is the Glutamine amidotransferase type-1 domain. The active-site Nucleophile is Cys-82. Catalysis depends on residues His-169 and Glu-171. The region spanning 196–385 (WSMSSFVDEK…LGIPHKLVWR (190 aa)) is the GMPS ATP-PPase domain. Position 223–229 (223–229 (SGGVDSS)) interacts with ATP.

As to quaternary structure, homodimer.

The enzyme catalyses XMP + L-glutamine + ATP + H2O = GMP + L-glutamate + AMP + diphosphate + 2 H(+). It functions in the pathway purine metabolism; GMP biosynthesis; GMP from XMP (L-Gln route): step 1/1. Catalyzes the synthesis of GMP from XMP. This Clostridium kluyveri (strain NBRC 12016) protein is GMP synthase [glutamine-hydrolyzing].